The sequence spans 513 residues: Light-independent protochlorophyllide reductase subunit B (513 aa).

Asp36 contacts [4Fe-4S] cluster. Asp299 (proton donor) is an active-site residue. 434-435 (GM) is a binding site for substrate.

The protein belongs to the ChlB/BchB/BchZ family. In terms of assembly, protochlorophyllide reductase is composed of three subunits; ChlL, ChlN and ChlB. Forms a heterotetramer of two ChlB and two ChlN subunits. [4Fe-4S] cluster serves as cofactor.

The protein localises to the plastid. Its subcellular location is the chloroplast. It catalyses the reaction chlorophyllide a + oxidized 2[4Fe-4S]-[ferredoxin] + 2 ADP + 2 phosphate = protochlorophyllide a + reduced 2[4Fe-4S]-[ferredoxin] + 2 ATP + 2 H2O. It participates in porphyrin-containing compound metabolism; chlorophyll biosynthesis (light-independent). Functionally, component of the dark-operative protochlorophyllide reductase (DPOR) that uses Mg-ATP and reduced ferredoxin to reduce ring D of protochlorophyllide (Pchlide) to form chlorophyllide a (Chlide). This reaction is light-independent. The NB-protein (ChlN-ChlB) is the catalytic component of the complex. The protein is Light-independent protochlorophyllide reductase subunit B of Chaetosphaeridium globosum (Charophycean green alga).